A 298-amino-acid chain; its full sequence is N-acetylmuramic acid 6-phosphate etherase (298 aa).

The 164-residue stretch at 54–217 (TIKAMKQGGR…STTVMIGLGK (164 aa)) folds into the SIS domain. Glutamate 82 acts as the Proton donor in catalysis. Glutamate 113 is an active-site residue.

It belongs to the GCKR-like family. MurNAc-6-P etherase subfamily. In terms of assembly, homodimer.

It catalyses the reaction N-acetyl-D-muramate 6-phosphate + H2O = N-acetyl-D-glucosamine 6-phosphate + (R)-lactate. Its pathway is amino-sugar metabolism; N-acetylmuramate degradation. In terms of biological role, specifically catalyzes the cleavage of the D-lactyl ether substituent of MurNAc 6-phosphate, producing GlcNAc 6-phosphate and D-lactate. The sequence is that of N-acetylmuramic acid 6-phosphate etherase from Halalkalibacterium halodurans (strain ATCC BAA-125 / DSM 18197 / FERM 7344 / JCM 9153 / C-125) (Bacillus halodurans).